The following is a 166-amino-acid chain: Peptide methionine sulfoxide reductase MsrA (166 aa).

The active site involves cysteine 11.

The protein belongs to the MsrA Met sulfoxide reductase family.

The catalysed reaction is L-methionyl-[protein] + [thioredoxin]-disulfide + H2O = L-methionyl-(S)-S-oxide-[protein] + [thioredoxin]-dithiol. It carries out the reaction [thioredoxin]-disulfide + L-methionine + H2O = L-methionine (S)-S-oxide + [thioredoxin]-dithiol. Functionally, has an important function as a repair enzyme for proteins that have been inactivated by oxidation. Catalyzes the reversible oxidation-reduction of methionine sulfoxide in proteins to methionine. In Lachnoclostridium phytofermentans (strain ATCC 700394 / DSM 18823 / ISDg) (Clostridium phytofermentans), this protein is Peptide methionine sulfoxide reductase MsrA.